The chain runs to 276 residues: Radial spoke head protein 9 homolog (276 aa).

It belongs to the flagellar radial spoke RSP9 family. Component of the axonemal radial spoke 1 (RS1) and 2 (RS2) complexes, at least composed of spoke head proteins RSPH1, RSPH3, RSPH9 and the cilia-specific component RSPH4A or sperm-specific component RSPH6A, spoke stalk proteins RSPH14, DNAJB13, DYDC1, ROPN1L and NME5, and the RS1 complex-specific anchor protein IQUB. Interacts with IQUB. Interacts with RSPH3B. Interacts with RSPH4A. Interacts with RSPH6A. Interacts with CFAP61. Interacts with LRRC23.

Its subcellular location is the cytoplasm. The protein resides in the cytoskeleton. It is found in the cilium axoneme. The protein localises to the flagellum axoneme. It localises to the cell projection. Its subcellular location is the kinocilium. Functions as part of axonemal radial spoke complexes that play an important part in the motility of sperm and cilia. Essential for both the radial spoke head assembly and the central pair microtubule stability in ependymal motile cilia. Required for motility of olfactory and neural cilia and for the structural integrity of ciliary axonemes in both 9+0 and 9+2 motile cilia. In Homo sapiens (Human), this protein is Radial spoke head protein 9 homolog (RSPH9).